Reading from the N-terminus, the 408-residue chain is MVKVNADYLKLKAGYLFPEISRRITEFSSKNPNADLIRLGIGDVTEPLPLACREAMKAAIEEMGTKDGFRGYGPEQGYKWLREIISENDYISRGCEISAEEIFVSDGSKCDSSNILDILGKENKIAVTDPVYPVYVDTNVMTGRTGEANSVGEYKGLSYIPINSENGFEASIPKDKFDLIYLCFPNNPTGAVATKEQLVSWVKYAKENNSLILFDAAYEAFIKDESIPHSIFEIEGARDCAIEFRSFSKNAGFTGTRCAFTVIPKSLKGKAGIETVDLWSLWNRRQSTKFNGVSYVVQRGAEAVYSKEGKTQIKKLVSFYMDNAEIIKSNLTAAGFEVFGAVNAPYAWIKTPKDMSSWDFFDFLLEKANVVGTPGSGFGAAGEGYFRLSAFNSRENVEKAMQRIVKLK.

Substrate is bound by residues Tyr15 and Gly42. Residues Tyr72, Ser108–Lys109, Tyr132, Asn187, Tyr218, and Ser246–Ser248 each bind pyridoxal 5'-phosphate. Positions 109, 132, and 187 each coordinate substrate. N6-(pyridoxal phosphate)lysine is present on Lys249. Pyridoxal 5'-phosphate contacts are provided by Arg257 and Asn291. Substrate is bound by residues Asn291 and Arg387.

This sequence belongs to the class-I pyridoxal-phosphate-dependent aminotransferase family. LL-diaminopimelate aminotransferase subfamily. Homodimer. The cofactor is pyridoxal 5'-phosphate.

It carries out the reaction (2S,6S)-2,6-diaminopimelate + 2-oxoglutarate = (S)-2,3,4,5-tetrahydrodipicolinate + L-glutamate + H2O + H(+). The protein operates within amino-acid biosynthesis; L-lysine biosynthesis via DAP pathway; LL-2,6-diaminopimelate from (S)-tetrahydrodipicolinate (aminotransferase route): step 1/1. Its function is as follows. Involved in the synthesis of meso-diaminopimelate (m-DAP or DL-DAP), required for both lysine and peptidoglycan biosynthesis. Catalyzes the direct conversion of tetrahydrodipicolinate to LL-diaminopimelate. The polypeptide is LL-diaminopimelate aminotransferase (Prochlorococcus marinus (strain NATL2A)).